Reading from the N-terminus, the 451-residue chain is MSGEQKSYLENQLEAVAEKTDAGYTFTFQREKIKLLDGLEANVIKDINPFFHKEIDVTDDEVIITIQPPSSYKAFRFMKAKDKKSKWQFAYQLVQAVQQHNLSRLNLIVAPENIVFDKGLTPYFLHYGVKESIPPYERDEERVWQELKAAAALAVDGAFAFEDYLKFNETLTFSAEAKAILDAESYDDLLELIQTHIDELEAKAKTYIHIPRKKWNIQRYIGLGLIVLLVPALIYSMYALFFAQPKHQAIVDSNRAFLNKQYSEVISTLSKYDAESLPESVQYQLATSYVEVENLGSAKTKNIENNLVTLQSDPQHFLYWIDYGRGEYKEAISIGRKLEYNDYIYFALAKYKQQLLSEDTNDEDIQKELDSVNSELEKAQKERQENKQSNSETSLVDTSEEQTQTDEEKQAEEKAAEEKAAAEEKAKKEEQKEKEDEKKETEKKDEKKDDK.

Residues 221-241 (IGLGLIVLLVPALIYSMYALF) form a helical membrane-spanning segment. Residues 362–447 (DEDIQKELDS…KKETEKKDEK (86 aa)) adopt a coiled-coil conformation. Positions 376-386 (LEKAQKERQEN) are enriched in basic and acidic residues. The interval 376–451 (LEKAQKERQE…EKKDEKKDDK (76 aa)) is disordered. Residues 387-397 (KQSNSETSLVD) are compositionally biased toward polar residues. Residues 406-451 (DEEKQAEEKAAEEKAAAEEKAKKEEQKEKEDEKKETEKKDEKKDDK) are compositionally biased toward basic and acidic residues.

It belongs to the EssB family.

It is found in the cell membrane. In terms of biological role, required for YukE secretion. Probable component or regulator of the ESX/ESAT-6-like secretion system (BsEss). Required to deliver LXG toxins to target cells. This Bacillus subtilis (strain 168) protein is ESX secretion system protein YukC (yukC).